We begin with the raw amino-acid sequence, 230 residues long: Porin OmpL (230 aa).

Residues 1–20 form the signal peptide; it reads MKSLNTLVILTSVISTSVFA.

This sequence belongs to the oligogalacturonate-specific porin KdgM (TC 1.B.35) family. OmpL subfamily.

It localises to the cell outer membrane. Outer membrane channel protein that allows an efficient diffusion of low-molecular-weight solutes such as small sugars and tetraglycine. However, the specific substrate recognized by the OmpL channel is unknown. The chain is Porin OmpL (ompL) from Salmonella typhi.